Reading from the N-terminus, the 484-residue chain is Sperm motility kinase Tcr mutant form (484 aa).

Residues 8-256 form the Protein kinase domain; that stretch reads YEMLETIGQG…VAEVMVHPWV (249 aa). ATP is bound by residues 14–22 and Lys-37; that span reads IGQGGCAQV. Asp-127 functions as the Proton acceptor in the catalytic mechanism. Disordered regions lie at residues 355–400 and 426–446; these read EPTG…TMDQ and STEGHISTSAEDKPVHSRGWP. Over residues 391–400 the composition is skewed to polar residues; sequence PINTTPTMDQ.

The protein belongs to the protein kinase superfamily. Tyr protein kinase family. Smok subfamily. As to expression, testis-specific. Expressed in the testis from 22 days postpartum (22 dpp). Expressed late in spermiogenesis, only in Tcr-containing t-haplotypes.

It carries out the reaction L-seryl-[protein] + ATP = O-phospho-L-seryl-[protein] + ADP + H(+). The enzyme catalyses L-threonyl-[protein] + ATP = O-phospho-L-threonyl-[protein] + ADP + H(+). Functionally, while the main function of Smoks is to control sperm motility, the role of Smok-Tcr, with reduced kinase activity, is to counterbalance a signaling impairment caused by the distorter/sterility loci, giving t-sperm an advantage in reaching the oocytes. Transmission ratio distortion also called segregation distortion is the name given to the phenomenon above-mentioned. Being associated with the T-complex, it allows males heterozygous for a complete t-haplotype to preferentially transmit the t-haplotype chromosome. The protein is Sperm motility kinase Tcr mutant form (Smoktcr) of Mus musculus (Mouse).